We begin with the raw amino-acid sequence, 529 residues long: MSPMSLQDQVATRRTFAIISHPDAGKTTITEKLLLYGNLIQSAGTVKGKKSGKHATSDWMEMEKERGISVTTSVMQFPYKGATVNLLDTPGHADFSEDTYRTLTAVDSALMVIDAAKGVEQRTVKLMEVCRLRDTPILTFINKLDRDVRDGIDVLDEIEDVLNIECAPITWPIGMGKSFKGVYNLLTDTTVLYKTGQGHTVQDVREVKGLNNPELDEAVGTDYAEELRDTLELVQGASHEFDLERFLAGKLTPVFFGTALGNFGVDHMLDGLVQWAPPPQPRDATARTVEADEPKMTGFVFKIQANMDPRHRDRIAFMRICSGTYRKGIKLKQVRTGKDVRIADALTFLAGERDNVEEAFSGDIIGLHNHGTIQIGDTFTEGEELAFTGIPHFAPELFQRVVLNDPLKSKQLHKGLTQLAEEGATQVFFPLRNNDVILGAVGSLQFDVVAARLKGEYGVDCRYEPVSVATARWVEADSDKELAAFERKAHDNLSRDGAGHLTYLAPTRVNLQLAQERHPDIRFRETREI.

One can recognise a tr-type G domain in the interval 11-280 (ATRRTFAIIS…GLVQWAPPPQ (270 aa)). GTP contacts are provided by residues 20–27 (SHPDAGKT), 88–92 (DTPGH), and 142–145 (NKLD).

It belongs to the TRAFAC class translation factor GTPase superfamily. Classic translation factor GTPase family. PrfC subfamily.

Its subcellular location is the cytoplasm. In terms of biological role, increases the formation of ribosomal termination complexes and stimulates activities of RF-1 and RF-2. It binds guanine nucleotides and has strong preference for UGA stop codons. It may interact directly with the ribosome. The stimulation of RF-1 and RF-2 is significantly reduced by GTP and GDP, but not by GMP. In Alcanivorax borkumensis (strain ATCC 700651 / DSM 11573 / NCIMB 13689 / SK2), this protein is Peptide chain release factor 3.